The primary structure comprises 960 residues: MDSIPNEDDLEKLLVAEQNVPYGKNYESFEDEENYLLELRNANALENLEHRSIPNDLFHSSQPVGSPTRNGDDIPSTLDLYSSDNAAIDTDISEDETINQRHAPQTDYRYPNTSANPKMGLEESMDIDMPSIDLDISNAAAFPRDSNLLFRNYNSHTKTSEKGSPVNFEKENQDSNVLFSTGRTSVLHIDAEQSQTNNTVTPLKDDALSLFSFENDVNGAVNDNSLDQKLSASKNSQRVSLPFFSKIELDEGSSFSGPKISARTSSGKIIYFPKKKNRHSDGLLLQPKRLADEISQVNEIGKDFNQDLLNSVRIWSENFLIVSKEKSVALKTEKLDSLQITNCTTKPQSQKLWVDTYRPQLFRDLLGDERVHRAAMHWIKAWDPCVFGKSRLQPSKSMRFNPRFTNITSDSDRPDKRIMMLTGLAGAGKTTLAHVIAHQAGYKVLEINASDDRTAHTVHEKVSSAISNHSALSSQPTCVIVDEIDGGDPAFVRALLSLLESDEKATEYSQAGNSKKKKKFKKLCRPIICICNDLYTPALRPLRPYAQIIYFRPPPQASLVGRLRTICRNENIAVDSRSLTLLTDIYNSDIRSCINSLQLLSLNNKRIDSETIKLLQPKSNSFSTSSLIQSLFLQLDNKQIRAIEASQPTYSHLDALLARIDGANDSESVLMNCFHTYLDLPFTDSLLSKPALTSEWLYFFDQLHSQCYKGNYELWRYIPYSIIHFHYLYATPEKCRLPHPPRSDLEALKLYRTRKEILDSFISTLNAYENQMHGERSILLELIRTILITINPTLKQKEDSMPRSALPSKIEHAINILNHYNLRFQQLPVGDGNYVYRLEPPLDELVWDAPTSSYSVRQMLSQELLKKRLADIKKQTLTDNPTSSNSSRKRKDFNSGKAIKRDFFGRIISEPKSEAVTSNNAALNTGDHPVSIKHAINIKFHDGFSNAVRKPISLNEILNF.

Disordered stretches follow at residues 56–79 (DLFH…STLD) and 91–113 (DISE…YPNT). Residues 58–69 (FHSSQPVGSPTR) show a composition bias toward polar residues. An ATP-binding site is contributed by 423–430 (GLAGAGKT).

It belongs to the activator 1 small subunits family. CTF18 subfamily. As to quaternary structure, component of the ctf18-RFC complex which consists of ctf18, ctf8, dcc1, rfc2, rfc3, rfc4 and rfc5.

It localises to the nucleus. In terms of biological role, essential for the fidelity of chromosome transmission. Required for the DNA replication block checkpoint. Replication factor C (RFC) complex has an essential but redundant activity in sister chromatid cohesion establishment. Acts as a PCNA loader, loading PCNA onto primed templates. An RFC-like complex (ctf18-RFC) is formed where ctf18 replaces rfc1 in the RFC complex along with the association of dcc1 and ctf8. This complex is required for efficient establishment of chromosome cohesion during S-phase. This chain is Chromosome transmission fidelity protein 18 (ctf18), found in Schizosaccharomyces pombe (strain 972 / ATCC 24843) (Fission yeast).